Here is a 242-residue protein sequence, read N- to C-terminus: Uridylate kinase (242 aa).

ATP is bound at residue 11-14; the sequence is KLSG. Residues 19 to 24 are involved in allosteric activation by GTP; sequence GNMGYG. Residue G53 coordinates UMP. 2 residues coordinate ATP: G54 and R58. Residues D73 and 134–141 each bind UMP; that span reads SGNPFFTT. ATP contacts are provided by T161, Y167, and D170.

Belongs to the UMP kinase family. Homohexamer.

It is found in the cytoplasm. It carries out the reaction UMP + ATP = UDP + ADP. It functions in the pathway pyrimidine metabolism; CTP biosynthesis via de novo pathway; UDP from UMP (UMPK route): step 1/1. Its activity is regulated as follows. Allosterically activated by GTP. Inhibited by UTP. Catalyzes the reversible phosphorylation of UMP to UDP. In Trichormus variabilis (strain ATCC 29413 / PCC 7937) (Anabaena variabilis), this protein is Uridylate kinase.